A 61-amino-acid chain; its full sequence is Protein CopA/IncA (61 aa).

In terms of biological role, controls the copy number in gene replication. The polypeptide is Protein CopA/IncA (copA) (Escherichia coli).